The chain runs to 388 residues: uncharacterized protein (388 aa).

Residues Cys18, Cys24, Cys27, and Cys99 each coordinate [4Fe-4S] cluster. Residues Gln212, Glu262, and Asn313 each contribute to the S-adenosyl-L-methionine site. Residue Cys343 is the Nucleophile of the active site.

It belongs to the class I-like SAM-binding methyltransferase superfamily. RNA M5U methyltransferase family.

This is an uncharacterized protein from Bdellovibrio bacteriovorus (strain ATCC 15356 / DSM 50701 / NCIMB 9529 / HD100).